Here is a 239-residue protein sequence, read N- to C-terminus: Phosphoribosylaminoimidazole-succinocarboxamide synthase (239 aa).

It belongs to the SAICAR synthetase family.

It catalyses the reaction 5-amino-1-(5-phospho-D-ribosyl)imidazole-4-carboxylate + L-aspartate + ATP = (2S)-2-[5-amino-1-(5-phospho-beta-D-ribosyl)imidazole-4-carboxamido]succinate + ADP + phosphate + 2 H(+). Its pathway is purine metabolism; IMP biosynthesis via de novo pathway; 5-amino-1-(5-phospho-D-ribosyl)imidazole-4-carboxamide from 5-amino-1-(5-phospho-D-ribosyl)imidazole-4-carboxylate: step 1/2. The sequence is that of Phosphoribosylaminoimidazole-succinocarboxamide synthase from Nitratiruptor sp. (strain SB155-2).